The chain runs to 490 residues: Cytochrome P450 2C9 (490 aa).

Position 435 (Cys-435) interacts with heme.

It belongs to the cytochrome P450 family. Heme serves as cofactor.

The protein localises to the endoplasmic reticulum membrane. Its subcellular location is the microsome membrane. It carries out the reaction an organic molecule + reduced [NADPH--hemoprotein reductase] + O2 = an alcohol + oxidized [NADPH--hemoprotein reductase] + H2O + H(+). The enzyme catalyses (5Z,8Z,11Z,14Z)-eicosatetraenoate + reduced [NADPH--hemoprotein reductase] + O2 = (8R,9S)-epoxy-(5Z,11Z,14Z)-eicosatrienoate + oxidized [NADPH--hemoprotein reductase] + H2O + H(+). The catalysed reaction is (5Z,8Z,11Z,14Z)-eicosatetraenoate + reduced [NADPH--hemoprotein reductase] + O2 = (8S,9R)-epoxy-(5Z,11Z,14Z)-eicosatrienoate + oxidized [NADPH--hemoprotein reductase] + H2O + H(+). It catalyses the reaction (5Z,8Z,11Z,14Z)-eicosatetraenoate + reduced [NADPH--hemoprotein reductase] + O2 = (11R,12S)-epoxy-(5Z,8Z,14Z)-eicosatrienoate + oxidized [NADPH--hemoprotein reductase] + H2O + H(+). It carries out the reaction (5Z,8Z,11Z,14Z)-eicosatetraenoate + reduced [NADPH--hemoprotein reductase] + O2 = (11S,12R)-epoxy-(5Z,8Z,14Z)-eicosatrienoate + oxidized [NADPH--hemoprotein reductase] + H2O + H(+). The enzyme catalyses (5Z,8Z,11Z,14Z)-eicosatetraenoate + reduced [NADPH--hemoprotein reductase] + O2 = (14R,15S)-epoxy-(5Z,8Z,11Z)-eicosatrienoate + oxidized [NADPH--hemoprotein reductase] + H2O + H(+). The catalysed reaction is (5Z,8Z,11Z,14Z)-eicosatetraenoate + reduced [NADPH--hemoprotein reductase] + O2 = (14S,15R)-epoxy-(5Z,8Z,11Z)-eicosatrienoate + oxidized [NADPH--hemoprotein reductase] + H2O + H(+). It catalyses the reaction (5Z,8Z,11Z,14Z,17Z)-eicosapentaenoate + reduced [NADPH--hemoprotein reductase] + O2 = 8,9-epoxy-(5Z,11Z,14Z,17Z)-eicosatetraenoate + oxidized [NADPH--hemoprotein reductase] + H2O + H(+). It carries out the reaction (5Z,8Z,11Z,14Z,17Z)-eicosapentaenoate + reduced [NADPH--hemoprotein reductase] + O2 = 11,12-epoxy-(5Z,8Z,14Z,17Z)-eicosatetraenoate + oxidized [NADPH--hemoprotein reductase] + H2O + H(+). The enzyme catalyses (5Z,8Z,11Z,14Z,17Z)-eicosapentaenoate + reduced [NADPH--hemoprotein reductase] + O2 = 14,15-epoxy-(5Z,8Z,11Z,17Z)-eicosatetraenoate + oxidized [NADPH--hemoprotein reductase] + H2O + H(+). The catalysed reaction is (5Z,8Z,11Z,14Z,17Z)-eicosapentaenoate + reduced [NADPH--hemoprotein reductase] + O2 = (17R,18S)-epoxy-(5Z,8Z,11Z,14Z)-eicosatetraenoate + oxidized [NADPH--hemoprotein reductase] + H2O + H(+). It catalyses the reaction cholesterol + reduced [NADPH--hemoprotein reductase] + O2 = 25-hydroxycholesterol + oxidized [NADPH--hemoprotein reductase] + H2O + H(+). It carries out the reaction 17beta-estradiol + reduced [NADPH--hemoprotein reductase] + O2 = 2-hydroxy-17beta-estradiol + oxidized [NADPH--hemoprotein reductase] + H2O + H(+). The enzyme catalyses estrone + reduced [NADPH--hemoprotein reductase] + O2 = 2-hydroxyestrone + oxidized [NADPH--hemoprotein reductase] + H2O + H(+). The catalysed reaction is (5Z,8Z,11Z,14Z)-eicosatetraenoate + reduced [NADPH--hemoprotein reductase] + O2 = (11R)-hydroxy-(5Z,8Z,12E,14Z)-eicosatetraenoate + oxidized [NADPH--hemoprotein reductase] + H2O + H(+). It catalyses the reaction (5Z,8Z,11Z,14Z)-eicosatetraenoate + reduced [NADPH--hemoprotein reductase] + O2 = (12R)-hydroxy-(5Z,8Z,10E,14Z)-eicosatetraenoate + oxidized [NADPH--hemoprotein reductase] + H2O + H(+). It carries out the reaction (5Z,8Z,11Z,14Z)-eicosatetraenoate + reduced [NADPH--hemoprotein reductase] + O2 = (15R)-hydroxy-(5Z,8Z,11Z,13E)-eicosatetraenoate + oxidized [NADPH--hemoprotein reductase] + H2O + H(+). The enzyme catalyses (5Z,8Z,11Z,14Z)-eicosatetraenoate + reduced [NADPH--hemoprotein reductase] + O2 = 10-hydroxy-(5Z,8Z,11Z,14Z)-eicosatetraenoate + oxidized [NADPH--hemoprotein reductase] + H2O + H(+). The catalysed reaction is (9Z,12Z)-octadecadienoate + reduced [NADPH--hemoprotein reductase] + O2 = (13R)-hydroxy-(9Z,11E)-octadecadienoate + oxidized [NADPH--hemoprotein reductase] + H2O + H(+). It catalyses the reaction (9Z,12Z)-octadecadienoate + reduced [NADPH--hemoprotein reductase] + O2 = (9R)-hydroxy-(10E,12Z)-octadecadienoate + oxidized [NADPH--hemoprotein reductase] + H2O + H(+). It carries out the reaction (5Z,8Z,11Z,14Z)-eicosatetraenoate + reduced [NADPH--hemoprotein reductase] + O2 = 19-hydroxy-(5Z,8Z,11Z,14Z)-eicosatetraenoate + oxidized [NADPH--hemoprotein reductase] + H2O + H(+). The enzyme catalyses (5Z,8Z,11Z,14Z)-eicosatetraenoate + reduced [NADPH--hemoprotein reductase] + O2 = 13(S)-hydroxy-(5Z,8Z,11Z,14Z)-eicosatetraenoate + oxidized [NADPH--hemoprotein reductase] + H2O + H(+). The catalysed reaction is (5Z,8Z,11Z,14Z)-eicosatetraenoate + reduced [NADPH--hemoprotein reductase] + O2 = 14,15-epoxy-(5Z,8Z,11Z)-eicosatrienoate + oxidized [NADPH--hemoprotein reductase] + H2O + H(+). It catalyses the reaction (5Z,8Z,11Z,14Z)-eicosatetraenoate + reduced [NADPH--hemoprotein reductase] + O2 = 11,12-epoxy-(5Z,8Z,14Z)-eicosatrienoate + oxidized [NADPH--hemoprotein reductase] + H2O + H(+). It carries out the reaction (5Z,8Z,11Z,14Z)-eicosatetraenoate + reduced [NADPH--hemoprotein reductase] + O2 = 13-hydroxy-(5Z,8Z,11Z,14Z)-eicosatetraenoate + oxidized [NADPH--hemoprotein reductase] + H2O + H(+). The enzyme catalyses (4R)-limonene + reduced [NADPH--hemoprotein reductase] + O2 = (1R,5S)-carveol + oxidized [NADPH--hemoprotein reductase] + H2O + H(+). The catalysed reaction is (4S)-limonene + reduced [NADPH--hemoprotein reductase] + O2 = (1S,5R)-carveol + oxidized [NADPH--hemoprotein reductase] + H2O + H(+). It catalyses the reaction (4S)-limonene + reduced [NADPH--hemoprotein reductase] + O2 = (4S)-perillyl alcohol + oxidized [NADPH--hemoprotein reductase] + H2O + H(+). Its pathway is lipid metabolism; arachidonate metabolism. It functions in the pathway steroid metabolism; cholesterol metabolism. It participates in terpene metabolism; (4R)-limonene degradation. In terms of biological role, a cytochrome P450 monooxygenase involved in the metabolism of various endogenous substrates, including fatty acids and steroids. Mechanistically, uses molecular oxygen inserting one oxygen atom into a substrate, and reducing the second into a water molecule, with two electrons provided by NADPH via cytochrome P450 reductase (NADPH--hemoprotein reductase). Catalyzes the epoxidation of double bonds of polyunsaturated fatty acids (PUFA). Catalyzes the hydroxylation of carbon-hydrogen bonds. Metabolizes cholesterol toward 25-hydroxycholesterol, a physiological regulator of cellular cholesterol homeostasis. Exhibits low catalytic activity for the formation of catechol estrogens from 17beta-estradiol (E2) and estrone (E1), namely 2-hydroxy E1 and E2. Catalyzes bisallylic hydroxylation and hydroxylation with double-bond migration of polyunsaturated fatty acids (PUFA). Also metabolizes plant monoterpenes such as limonene. Oxygenates (R)- and (S)-limonene to produce carveol and perillyl alcohol. Contributes to the wide pharmacokinetics variability of the metabolism of drugs such as S-warfarin, diclofenac, phenytoin, tolbutamide and losartan. In Homo sapiens (Human), this protein is Cytochrome P450 2C9.